Here is a 173-residue protein sequence, read N- to C-terminus: Co-chaperone protein HscB homolog (173 aa).

Residues 5 to 77 (CHFALFELQP…PKRARYLLAM (73 aa)) form the J domain.

It belongs to the HscB family. As to quaternary structure, interacts with HscA and stimulates its ATPase activity.

Its function is as follows. Co-chaperone involved in the maturation of iron-sulfur cluster-containing proteins. Seems to help targeting proteins to be folded toward HscA. The chain is Co-chaperone protein HscB homolog from Pseudomonas fluorescens (strain SBW25).